Consider the following 247-residue polypeptide: Peroxisomal membrane protein 11A (247 aa).

Over 1-83 the chain is Cytoplasmic; that stretch reads MDAFTRFTNQ…SIHATDLVPR (83 aa). The chain crosses the membrane as a helical span at residues 84–105; sequence LCLTLANLNRVIYFICDTILWV. The Lumenal portion of the chain corresponds to 106–219; sequence RSVGLTSGIN…DQLGIYKSNP (114 aa). The chain crosses the membrane as a helical span at residues 220–239; sequence GIIGLGGLVSSIAGMITVAY. Positions 220-239 are required for homodimerization, interaction with PEX11G, and peroxisomal localization; that stretch reads GIIGLGGLVSSIAGMITVAY. The Cytoplasmic segment spans residues 240 to 247; that stretch reads PQMKLKTR.

It belongs to the peroxin-11 family. As to quaternary structure, homodimer. Heterodimer with PEX11G. Probably interacts with COPB2 and COPA. Interacts with PEX19. Interacts with FIS1. Post-translationally, seems not to be N-glycosylated.

The protein localises to the peroxisome membrane. May be involved in peroxisomal proliferation and may regulate peroxisomes division. May mediate binding of coatomer proteins to the peroxisomal membrane. Promotes membrane protrusion and elongation on the peroxisomal surface. The polypeptide is Peroxisomal membrane protein 11A (PEX11A) (Homo sapiens (Human)).